Reading from the N-terminus, the 374-residue chain is Alcohol dehydrogenase 1 (374 aa).

The residue at position 1 (S1) is an N-acetylserine. Zn(2+)-binding residues include C46, H67, C97, C100, C103, C111, and C174. Residues 199–204, D223, K228, 292–294, and R369 contribute to the NAD(+) site; these read GLGGVG and VGV.

Belongs to the zinc-containing alcohol dehydrogenase family. Class-I subfamily. Zn(2+) serves as cofactor.

It localises to the cytoplasm. It catalyses the reaction a primary alcohol + NAD(+) = an aldehyde + NADH + H(+). The catalysed reaction is a secondary alcohol + NAD(+) = a ketone + NADH + H(+). The sequence is that of Alcohol dehydrogenase 1 from Alligator mississippiensis (American alligator).